Reading from the N-terminus, the 249-residue chain is NADH-quinone oxidoreductase subunit C (249 aa).

It belongs to the complex I 30 kDa subunit family. In terms of assembly, NDH-1 is composed of 14 different subunits. Subunits NuoB, C, D, E, F, and G constitute the peripheral sector of the complex.

The protein localises to the cell inner membrane. It carries out the reaction a quinone + NADH + 5 H(+)(in) = a quinol + NAD(+) + 4 H(+)(out). Its function is as follows. NDH-1 shuttles electrons from NADH, via FMN and iron-sulfur (Fe-S) centers, to quinones in the respiratory chain. The immediate electron acceptor for the enzyme in this species is believed to be ubiquinone. Couples the redox reaction to proton translocation (for every two electrons transferred, four hydrogen ions are translocated across the cytoplasmic membrane), and thus conserves the redox energy in a proton gradient. The polypeptide is NADH-quinone oxidoreductase subunit C (Xylella fastidiosa (strain M12)).